Reading from the N-terminus, the 64-residue chain is Alpha-conotoxin SI (64 aa).

The N-terminal stretch at 1–21 (MGMRMMFTVFLLVVLATTVVS) is a signal peptide. Residues 22–49 (FPSDRASDGRDDEAKDERSDMHESDRKE) constitute a propeptide that is removed on maturation. Positions 23–47 (PSDRASDGRDDEAKDERSDMHESDR) are disordered. Residues 26–47 (RASDGRDDEAKDERSDMHESDR) show a composition bias toward basic and acidic residues. 2 disulfide bridges follow: Cys51/Cys56 and Cys52/Cys62. Cys62 carries the cysteine amide modification.

The protein belongs to the conotoxin A superfamily. As to expression, expressed by the venom duct.

It localises to the secreted. Its function is as follows. Alpha-conotoxins act on postsynaptic membranes, they bind to the nicotinic acetylcholine receptors (nAChR) and thus inhibit them. Is active on muscle nAChR (IC(50)=113 nM on adult subtype (alpha-1-beta-1-gamma-delta/CHRNA1-CHRNB1-CHRNG-CHRND) and IC(50)=142 nM on fetal subtype (alpha-1-beta-1-delta-epsilon/CHRNA1-CHRNB1-CHRND-CHRNE)). On mice muscle receptors, its higher affinity site is the alpha/delta nAChR subunit interface. On Torpedo receptors, it does not distinguish between alpha/delta and alpha/gamma acetylcholine-binding sites. In vivo, causes paralysis followed by death when injected into goldfish. In contrast, has no effect on mice, when similar doses are intraperitoneally or intracerebrally injected. This Conus striatus (Striated cone) protein is Alpha-conotoxin SI.